The primary structure comprises 430 residues: tRNA(Ile)-lysidine synthase (430 aa).

21 to 26 provides a ligand contact to ATP; that stretch reads SGGLDS.

Belongs to the tRNA(Ile)-lysidine synthase family.

It localises to the cytoplasm. It catalyses the reaction cytidine(34) in tRNA(Ile2) + L-lysine + ATP = lysidine(34) in tRNA(Ile2) + AMP + diphosphate + H(+). Ligates lysine onto the cytidine present at position 34 of the AUA codon-specific tRNA(Ile) that contains the anticodon CAU, in an ATP-dependent manner. Cytidine is converted to lysidine, thus changing the amino acid specificity of the tRNA from methionine to isoleucine. The protein is tRNA(Ile)-lysidine synthase of Salmonella agona (strain SL483).